Reading from the N-terminus, the 79-residue chain is Short neurotoxin 8 (79 aa).

The N-terminal stretch at 1–21 is a signal peptide; it reads MKTLLLTLVMVTIMCLDLGYT. Cystine bridges form between cysteine 24–cysteine 41, cysteine 34–cysteine 59, cysteine 63–cysteine 71, and cysteine 72–cysteine 77.

Belongs to the three-finger toxin family. Short-chain subfamily. Type III alpha-neurotoxin sub-subfamily. Expressed by the venom gland.

It localises to the secreted. Binds with high affinity to muscle nicotinic acetylcholine receptor (nAChR) and hinders acetylcholine binding to the receptor, thereby impairing neuromuscular transmission. Causes muscle paralysis, spasms and increased respiration. In Pseudonaja textilis (Eastern brown snake), this protein is Short neurotoxin 8.